The sequence spans 162 residues: Regulatory protein RecX (162 aa).

Belongs to the RecX family.

The protein localises to the cytoplasm. Modulates RecA activity. This is Regulatory protein RecX from Xanthomonas campestris pv. campestris (strain 8004).